The chain runs to 230 residues: Acyl-protein thioesterase 1 (230 aa).

Residues S119, D174, and H208 each act as charge relay system in the active site. K224 is modified (N6-acetyllysine).

It belongs to the AB hydrolase superfamily. AB hydrolase 2 family. As to quaternary structure, homodimer.

The protein localises to the cytoplasm. The protein resides in the cell membrane. It localises to the nucleus membrane. It is found in the endoplasmic reticulum. The enzyme catalyses S-hexadecanoyl-L-cysteinyl-[protein] + H2O = L-cysteinyl-[protein] + hexadecanoate + H(+). It catalyses the reaction 1-hexadecanoyl-sn-glycero-3-phosphocholine + H2O = sn-glycerol 3-phosphocholine + hexadecanoate + H(+). It carries out the reaction a 1-(9Z-octadecenoyl)-2-acyl-sn-glycero-3-phosphocholine + H2O = a 2-acyl-sn-glycero-3-phosphocholine + (9Z)-octadecenoate + H(+). Functionally, acts as an acyl-protein thioesterase. Hydrolyzes fatty acids from S-acylated cysteine residues in proteins such as trimeric G alpha proteins or HRAS. Acts as a palmitoyl thioesterase that catalyzes depalmitoylation of proteins, such as ADRB2, KCNMA1 and SQSTM1. Acts as a negative regulator of autophagy by mediating palmitoylation of SQSTM1, decreasing affinity between SQSTM1 and ATG8 proteins and recruitment of ubiquitinated cargo proteins to autophagosomes. Acts as a lysophospholipase and hydrolyzes lysophosphatidylcholine (lyso-PC). Also hydrolyzes lysophosphatidylethanolamine (lyso-PE), lysophosphatidylinositol (lyso-PI) and lysophosphatidylserine (lyso-PS). Has much higher thioesterase activity than lysophospholipase activity. Contributes to the production of lysophosphatidic acid (LPA) during blood coagulation by recognizing and cleaving plasma phospholipids to generate lysophospholipids which in turn act as substrates for ENPP2 to produce LPA. The chain is Acyl-protein thioesterase 1 (Lypla1) from Mus musculus (Mouse).